The following is a 30-amino-acid chain: Cysteine-rich venom protein hematin (30 aa).

The protein belongs to the CRISP family. Contains 8 disulfide bonds. In terms of tissue distribution, expressed by the venom gland.

It localises to the secreted. In terms of biological role, inhibits calcium-activated potassium channels (KCa), voltage-gated potassium channel (Kv), and the calcium release channel/ryanodine receptor (RyR). The polypeptide is Cysteine-rich venom protein hematin (Hemachatus haemachatus (Rinkhals)).